The following is a 294-amino-acid chain: Ribosomal RNA small subunit methyltransferase A (294 aa).

S-adenosyl-L-methionine contacts are provided by Asn-29, Val-31, Gly-56, Glu-77, Asp-107, and Asn-126.

This sequence belongs to the class I-like SAM-binding methyltransferase superfamily. rRNA adenine N(6)-methyltransferase family. RsmA subfamily.

The protein localises to the cytoplasm. The enzyme catalyses adenosine(1518)/adenosine(1519) in 16S rRNA + 4 S-adenosyl-L-methionine = N(6)-dimethyladenosine(1518)/N(6)-dimethyladenosine(1519) in 16S rRNA + 4 S-adenosyl-L-homocysteine + 4 H(+). Specifically dimethylates two adjacent adenosines (A1518 and A1519) in the loop of a conserved hairpin near the 3'-end of 16S rRNA in the 30S particle. May play a critical role in biogenesis of 30S subunits. The protein is Ribosomal RNA small subunit methyltransferase A of Mycobacterium sp. (strain MCS).